A 109-amino-acid chain; its full sequence is Thioredoxin (109 aa).

Positions 2–109 (TNCIVELTDG…LKDFLNLYLK (108 aa)) constitute a Thioredoxin domain. A disulfide bridge connects residues cysteine 33 and cysteine 36.

Belongs to the thioredoxin family.

Its function is as follows. Participates in various redox reactions through the reversible oxidation of its active center dithiol to a disulfide and catalyzes dithiol-disulfide exchange reactions. The sequence is that of Thioredoxin (trxA) from Buchnera aphidicola subsp. Baizongia pistaciae (strain Bp).